The following is a 519-amino-acid chain: Laccase-2 (519 aa).

An N-terminal signal peptide occupies residues 1–20; the sequence is MGLQRFSFFVTLALVARSLA. 2 Plastocyanin-like domains span residues 22-147 and 159-301; these read IGPV…FVVY and VDNE…ILRY. N74 is a glycosylation site (N-linked (GlcNAc...) asparagine). 4 residues coordinate Cu cation: H84, H86, H129, and H131. 2 disulfides stabilise this stretch: C105/C508 and C137/C225. 6 N-linked (GlcNAc...) asparagine glycosylation sites follow: N161, N228, N237, N271, N353, and N361. The Plastocyanin-like 3 domain occupies 368–490; it reads TVPVLLQILS…AGFAIVFAED (123 aa). H415, H418, H420, H472, C473, H474, and H478 together coordinate Cu cation.

The protein belongs to the multicopper oxidase family. In terms of assembly, homodimer. The cofactor is Cu cation.

It is found in the secreted. It catalyses the reaction 4 hydroquinone + O2 = 4 benzosemiquinone + 2 H2O. In terms of biological role, lignin degradation and detoxification of lignin-derived products. This chain is Laccase-2, found in Trametes villosa (White-rot fungus).